We begin with the raw amino-acid sequence, 567 residues long: Ribulokinase (567 aa).

Belongs to the ribulokinase family.

The enzyme catalyses D-ribulose + ATP = D-ribulose 5-phosphate + ADP + H(+). It catalyses the reaction L-ribulose + ATP = L-ribulose 5-phosphate + ADP + H(+). The protein operates within carbohydrate degradation; L-arabinose degradation via L-ribulose; D-xylulose 5-phosphate from L-arabinose (bacterial route): step 2/3. The protein is Ribulokinase of Vibrio parahaemolyticus serotype O3:K6 (strain RIMD 2210633).